Reading from the N-terminus, the 425-residue chain is Serine--tRNA ligase 1 (425 aa).

230–232 (TSE) contributes to the L-serine binding site. ATP-binding positions include 261–263 (RRE) and Val277. Glu284 serves as a coordination point for L-serine. 348–351 (ELTS) is a binding site for ATP. Thr382 provides a ligand contact to L-serine.

This sequence belongs to the class-II aminoacyl-tRNA synthetase family. Type-1 seryl-tRNA synthetase subfamily. In terms of assembly, homodimer. The tRNA molecule binds across the dimer.

It is found in the cytoplasm. The catalysed reaction is tRNA(Ser) + L-serine + ATP = L-seryl-tRNA(Ser) + AMP + diphosphate + H(+). The enzyme catalyses tRNA(Sec) + L-serine + ATP = L-seryl-tRNA(Sec) + AMP + diphosphate + H(+). It participates in aminoacyl-tRNA biosynthesis; selenocysteinyl-tRNA(Sec) biosynthesis; L-seryl-tRNA(Sec) from L-serine and tRNA(Sec): step 1/1. Functionally, catalyzes the attachment of serine to tRNA(Ser). Is also able to aminoacylate tRNA(Sec) with serine, to form the misacylated tRNA L-seryl-tRNA(Sec), which will be further converted into selenocysteinyl-tRNA(Sec). In Streptomyces avermitilis (strain ATCC 31267 / DSM 46492 / JCM 5070 / NBRC 14893 / NCIMB 12804 / NRRL 8165 / MA-4680), this protein is Serine--tRNA ligase 1.